The following is a 171-amino-acid chain: Small ribosomal subunit protein uS5 (171 aa).

The S5 DRBM domain maps to 16 to 79 (LREKMISVNR…EEARRKLVKI (64 aa)).

It belongs to the universal ribosomal protein uS5 family. Part of the 30S ribosomal subunit. Contacts proteins S4 and S8.

Its function is as follows. With S4 and S12 plays an important role in translational accuracy. Functionally, located at the back of the 30S subunit body where it stabilizes the conformation of the head with respect to the body. The protein is Small ribosomal subunit protein uS5 of Thiobacillus denitrificans (strain ATCC 25259 / T1).